We begin with the raw amino-acid sequence, 287 residues long: Acetyl-coenzyme A carboxylase carboxyl transferase subunit beta (287 aa).

Positions 25–287 (VWTKCSACEQ…KMLNTHVIEE (263 aa)) constitute a CoA carboxyltransferase N-terminal domain. Residues Cys29, Cys32, Cys48, and Cys51 each contribute to the Zn(2+) site. The C4-type zinc finger occupies 29–51 (CSACEQVLYRAELERNLEVCPKC).

It belongs to the AccD/PCCB family. Acetyl-CoA carboxylase is a heterohexamer composed of biotin carboxyl carrier protein (AccB), biotin carboxylase (AccC) and two subunits each of ACCase subunit alpha (AccA) and ACCase subunit beta (AccD). The cofactor is Zn(2+).

It localises to the cytoplasm. It carries out the reaction N(6)-carboxybiotinyl-L-lysyl-[protein] + acetyl-CoA = N(6)-biotinyl-L-lysyl-[protein] + malonyl-CoA. Its pathway is lipid metabolism; malonyl-CoA biosynthesis; malonyl-CoA from acetyl-CoA: step 1/1. Component of the acetyl coenzyme A carboxylase (ACC) complex. Biotin carboxylase (BC) catalyzes the carboxylation of biotin on its carrier protein (BCCP) and then the CO(2) group is transferred by the transcarboxylase to acetyl-CoA to form malonyl-CoA. This Aeromonas salmonicida (strain A449) protein is Acetyl-coenzyme A carboxylase carboxyl transferase subunit beta.